Reading from the N-terminus, the 147-residue chain is Large ribosomal subunit protein uL15 (147 aa).

A compositionally biased stretch (basic and acidic residues) spans 1–13 (MRLHDLKPAEGAR). Residues 1 to 58 (MRLHDLKPAEGARRERKRVGRGIGSGHGKTSGRGQKGQKARSGGGVRPGFEGGQMPLT) form a disordered region. 2 stretches are compositionally biased toward gly residues: residues 21 to 35 (RGIG…GRGQ) and 42 to 52 (SGGGVRPGFEG).

This sequence belongs to the universal ribosomal protein uL15 family. In terms of assembly, part of the 50S ribosomal subunit.

Functionally, binds to the 23S rRNA. This is Large ribosomal subunit protein uL15 from Thermoanaerobacter sp. (strain X514).